Reading from the N-terminus, the 597-residue chain is Coronatine-insensitive protein homolog 1b (597 aa).

Residues 22-64 (SIPEEALHLVLGYVDDPRDREAVSLVCRRWHRIDALTRKHVTV) enclose the F-box domain. 5 residues coordinate jasmonate: Arg-92, Arg-353, Tyr-391, Arg-414, and Arg-501.

Interacts with TIFY10C/JAZ8 in a coronatine-dependent manner. Interacts with TIFY3/JAZ1, TIFY6A/JAZ3, TIFY6B/JAZ4, TIFY10A/JAZ6, TIFY10B/JAZ7, TIFY11A/JAZ9, TIFY11B/JAZ10, TIFY11C/JAZ11 and TIFY11D/JAZ12 in a coronatine-dependent manner. In terms of tissue distribution, expressed in roots, shoots, leaf sheaths and leaf blades.

In terms of biological role, involved in jasmonate (JA) signaling. Required for jasmonate signaling in plant defense responses. Can complement Arabidopsis coi1-1 mutant and restore jasmonate signaling. Component of SCF(COI1) E3 ubiquitin ligase complexes, which may mediate the ubiquitination and subsequent proteasomal degradation of target proteins, including TIFY/JAZ family. This is Coronatine-insensitive protein homolog 1b from Oryza sativa subsp. japonica (Rice).